A 446-amino-acid polypeptide reads, in one-letter code: Neuropeptide Y receptor type 5 (446 aa).

At 1–42 the chain is on the extracellular side; sequence MDLELQDFYNKTLATENNTAATRNSDFPVWDDYKSSVDDLQY. N-linked (GlcNAc...) asparagine glycans are attached at residues Asn10 and Asn17. The chain crosses the membrane as a helical span at residues 43-63; it reads FLIGLYTFVSLLGFMGNLLIL. The Cytoplasmic segment spans residues 64–77; that stretch reads MALMRKRNQKTMVN. The chain crosses the membrane as a helical span at residues 78 to 98; it reads FLIGNLAFSDILVVLFCSPFT. Residues 99–117 are Extracellular-facing; sequence LTSVLLDQWMFGKVMCHIM. Cys114 and Cys198 are disulfide-bonded. A helical membrane pass occupies residues 118 to 138; sequence PFLQCVSVLVSTLILISIAIV. Over 139-156 the chain is Cytoplasmic; sequence RYHMIKHPISNNLTANHG. Residues 157–177 form a helical membrane-spanning segment; the sequence is YFLIATVWTLGFAICSPLPVF. Residues 178–208 lie on the Extracellular side of the membrane; that stretch reads HSLVELQETFDSALLSSRYLCVESWPSDSYR. Residues 209–229 form a helical membrane-spanning segment; the sequence is IAFTISLLLVQYILPLVCLTV. Topologically, residues 230-369 are cytoplasmic; that stretch reads SHTSVCRSIS…KKRSRSVFYR (140 aa). Residues 370-390 form a helical membrane-spanning segment; sequence LTILILVFAVSWMPLHLFHVV. Residues 391–407 are Extracellular-facing; that stretch reads TDFNDNLISNRHFKLVY. Residues 408–428 traverse the membrane as a helical segment; it reads CICHLLGMMSCCLNPILYGFL. Topologically, residues 429-446 are cytoplasmic; it reads NNGIKADLISLIQCLHMS. Cys442 carries the S-palmitoyl cysteine lipid modification.

Belongs to the G-protein coupled receptor 1 family.

It localises to the cell membrane. Functionally, receptor for neuropeptide Y and peptide YY. The activity of this receptor is mediated by G proteins that inhibit adenylate cyclase activity. Seems to be associated with food intake. Could be involved in feeding disorders. The sequence is that of Neuropeptide Y receptor type 5 (NPY5R) from Canis lupus familiaris (Dog).